A 692-amino-acid chain; its full sequence is Protein adenylyltransferase SelO-1, mitochondrial (692 aa).

The N-terminal 24 residues, 1–24 (MASVGSRLTRFYISRPGVIARRFL), are a transit peptide targeting the mitochondrion. Residues G142, G144, K176, D188, G189, R246, and R253 each coordinate ATP. D337 functions as the Proton acceptor in the catalytic mechanism. Residues N338 and D347 each contribute to the Mg(2+) site. Position 347 (D347) interacts with ATP. The interval 637 to 676 (LEQPGWMGRGGAAIPGERDETEEEGSNSSGAGARGLVPYD) is disordered. A non-standard amino acid (selenocysteine) is located at residue U690.

Belongs to the SELO family. Requires Mg(2+) as cofactor.

The protein localises to the mitochondrion. The catalysed reaction is L-tyrosyl-[protein] + ATP = O-(5'-adenylyl)-L-tyrosyl-[protein] + diphosphate. The enzyme catalyses L-threonyl-[protein] + ATP = 3-O-(5'-adenylyl)-L-threonyl-[protein] + diphosphate. It catalyses the reaction L-seryl-[protein] + ATP = 3-O-(5'-adenylyl)-L-seryl-[protein] + diphosphate. Catalyzes the transfer of adenosine 5'-monophosphate (AMP) to Ser, Thr and Tyr residues of target proteins (AMPylation). May be a redox-active mitochondrial selenoprotein which interacts with a redox target protein. The polypeptide is Protein adenylyltransferase SelO-1, mitochondrial (Danio rerio (Zebrafish)).